Here is a 299-residue protein sequence, read N- to C-terminus: Virginiamycin B lyase (299 aa).

Residue His229 participates in substrate binding. Position 269 (Glu269) interacts with Mg(2+). The Proton acceptor role is filled by His271. Position 286 (Glu286) interacts with Mg(2+).

The protein belongs to the Vgb family. Monomer. It depends on Mg(2+) as a cofactor.

In terms of biological role, inactivates the type B streptogramin antibiotics by linearizing the lactone ring at the ester linkage, generating a free phenylglycine carboxylate and converting the threonyl moiety into 2-amino-butenoic acid. The protein is Virginiamycin B lyase (vgb) of Bordetella pertussis (strain Tohama I / ATCC BAA-589 / NCTC 13251).